Reading from the N-terminus, the 352-residue chain is tRNA pseudouridine synthase D (352 aa).

Residue aspartate 81 is the Nucleophile of the active site. The region spanning 157–303 (GIPNYFGAQR…MEHERRILRL (147 aa)) is the TRUD domain.

The protein belongs to the pseudouridine synthase TruD family.

It carries out the reaction uridine(13) in tRNA = pseudouridine(13) in tRNA. Functionally, responsible for synthesis of pseudouridine from uracil-13 in transfer RNAs. This is tRNA pseudouridine synthase D from Pseudomonas syringae pv. syringae (strain B728a).